Here is a 429-residue protein sequence, read N- to C-terminus: Glucose-1-phosphate adenylyltransferase (429 aa).

Alpha-D-glucose 1-phosphate is bound by residues glycine 162, glutamate 177–lysine 178, and serine 209.

The protein belongs to the bacterial/plant glucose-1-phosphate adenylyltransferase family. As to quaternary structure, homotetramer.

The enzyme catalyses alpha-D-glucose 1-phosphate + ATP + H(+) = ADP-alpha-D-glucose + diphosphate. Its pathway is glycan biosynthesis; glycogen biosynthesis. Functionally, involved in the biosynthesis of ADP-glucose, a building block required for the elongation reactions to produce glycogen. Catalyzes the reaction between ATP and alpha-D-glucose 1-phosphate (G1P) to produce pyrophosphate and ADP-Glc. The polypeptide is Glucose-1-phosphate adenylyltransferase (Trichormus variabilis (strain ATCC 29413 / PCC 7937) (Anabaena variabilis)).